The chain runs to 169 residues: uncharacterized protein (169 aa).

A compositionally biased stretch (low complexity) spans 144–157; the sequence is AEAHSASPASSDSS. Residues 144-169 are disordered; sequence AEAHSASPASSDSSPLTNNIRPISIM. Polar residues predominate over residues 158 to 169; the sequence is PLTNNIRPISIM.

This is an uncharacterized protein from Saccharomyces cerevisiae (strain ATCC 204508 / S288c) (Baker's yeast).